The chain runs to 90 residues: Small ribosomal subunit protein uS15 (90 aa).

This sequence belongs to the universal ribosomal protein uS15 family. As to quaternary structure, part of the 30S ribosomal subunit. Forms a bridge to the 50S subunit in the 70S ribosome, contacting the 23S rRNA.

One of the primary rRNA binding proteins, it binds directly to 16S rRNA where it helps nucleate assembly of the platform of the 30S subunit by binding and bridging several RNA helices of the 16S rRNA. Functionally, forms an intersubunit bridge (bridge B4) with the 23S rRNA of the 50S subunit in the ribosome. This is Small ribosomal subunit protein uS15 from Helicobacter acinonychis (strain Sheeba).